The primary structure comprises 35 residues: Cecropin-B (35 aa).

L35 bears the Leucine amide mark.

It belongs to the cecropin family.

Its subcellular location is the secreted. Its function is as follows. Cecropins have lytic and antibacterial activity against several Gram-positive and Gram-negative bacteria. In Antheraea pernyi (Chinese oak silk moth), this protein is Cecropin-B.